The primary structure comprises 316 residues: Glutathione synthetase (316 aa).

The 186-residue stretch at 125-310 folds into the ATP-grasp domain; that stretch reads KLFTAWFSDL…ITGMLMDAIE (186 aa). 151-207 is a binding site for ATP; the sequence is WEKHSDIILKPLDGMGGASIFRVKEGDPNLGVIAETLTEHGTCYCMAQNYLPAIKDG. Mg(2+)-binding residues include Glu281 and Asn283.

The protein belongs to the prokaryotic GSH synthase family. The cofactor is Mg(2+). Mn(2+) serves as cofactor.

The catalysed reaction is gamma-L-glutamyl-L-cysteine + glycine + ATP = glutathione + ADP + phosphate + H(+). Its pathway is sulfur metabolism; glutathione biosynthesis; glutathione from L-cysteine and L-glutamate: step 2/2. The protein is Glutathione synthetase of Shigella flexneri.